Consider the following 384-residue polypeptide: Cell adhesion molecule CEACAM18 (384 aa).

Positions 1–30 (MDLSRPRWSLWRRVFLMASLLACGICQASG) are cleaved as a signal peptide. Asparagine 108, asparagine 112, asparagine 121, asparagine 162, and asparagine 270 each carry an N-linked (GlcNAc...) asparagine glycan. In terms of domain architecture, Ig-like C2-type spans 227–314 (PDYVLLRSNP…LIMYMDVRIQ (88 aa)). Cysteine 255 and cysteine 296 are disulfide-bonded. Residues 358–384 (QPLLNQDKSGSMSVHPRPEDKTRRASR) are disordered. The segment covering 359-369 (PLLNQDKSGSM) has biased composition (polar residues). Positions 373-384 (PRPEDKTRRASR) are enriched in basic and acidic residues.

This sequence belongs to the immunoglobulin superfamily. CEA family.

This Homo sapiens (Human) protein is Cell adhesion molecule CEACAM18.